The sequence spans 138 residues: Large ribosomal subunit protein uL16 (138 aa).

Residues 1 to 17 (MLIPRRVKHRKQHHPTR) show a composition bias toward basic residues. A disordered region spans residues 1-24 (MLIPRRVKHRKQHHPTRRGAASGG).

It belongs to the universal ribosomal protein uL16 family. As to quaternary structure, part of the 50S ribosomal subunit.

In terms of biological role, binds 23S rRNA and is also seen to make contacts with the A and possibly P site tRNAs. In Kineococcus radiotolerans (strain ATCC BAA-149 / DSM 14245 / SRS30216), this protein is Large ribosomal subunit protein uL16.